The primary structure comprises 100 residues: Small ribosomal subunit protein uS14c (100 aa).

It belongs to the universal ribosomal protein uS14 family. As to quaternary structure, part of the 30S ribosomal subunit.

It is found in the plastid. The protein resides in the chloroplast. Functionally, binds 16S rRNA, required for the assembly of 30S particles. The protein is Small ribosomal subunit protein uS14c of Morus indica (Mulberry).